Consider the following 136-residue polypeptide: Selenoprotein M (136 aa).

A signal peptide spans 1-19 (MWLPLPLLLGLLQLQPILS). Catalysis depends on nucleophile residues Cys38 and Sec41. Residues 38–41 (CGGU) constitute a cross-link (cysteinyl-selenocysteine (Cys-Sec)). A non-standard amino acid (selenocysteine) is located at residue Sec41. A disordered region spans residues 111-136 (SSPDAPVPAEFKMAPARASGDTKEDL). Positions 133–136 (KEDL) match the Prevents secretion from ER motif.

The protein belongs to the selenoprotein M/F family.

It is found in the endoplasmic reticulum. May function as a thiol-disulfide oxidoreductase that participates in disulfide bond formation. This is Selenoprotein M (selenom) from Xenopus laevis (African clawed frog).